We begin with the raw amino-acid sequence, 246 residues long: Peroxisomal membrane protein 11A (246 aa).

Residues 1–93 (MDAFIRVANQ…LCLTLANLNR (93 aa)) are Cytoplasmic-facing. Residues 94-114 (VVYYICDTVLWAKSVGLTSGI) form a helical membrane-spanning segment. Topologically, residues 115-217 (NREKWQMRAA…LNQLGIYKSN (103 aa)) are lumenal. A helical membrane pass occupies residues 218–238 (LGVVGFGGLVSSVAGLITVVY). A required for homodimerization, interaction with PEX11G, and peroxisomal localization region spans residues 218–238 (LGVVGFGGLVSSVAGLITVVY). Topologically, residues 239–246 (PQLKLKAR) are cytoplasmic.

The protein belongs to the peroxin-11 family. In terms of assembly, homodimer. Heterodimer with PEX11G. Probably interacts with COPB2 and COPA. Interacts with PEX19. Interacts with FIS1. As to expression, expressed at high levels in kidney, liver, lung, brain, and testis and at low levels in heart, spleen and skeletal muscle.

It localises to the peroxisome membrane. Functionally, may be involved in peroxisomal proliferation and may regulate peroxisomes division. May mediate binding of coatomer proteins to the peroxisomal membrane. Promotes membrane protrusion and elongation on the peroxisomal surface. This Rattus norvegicus (Rat) protein is Peroxisomal membrane protein 11A (Pex11a).